The sequence spans 62 residues: Large ribosomal subunit protein uL30 (62 aa).

It belongs to the universal ribosomal protein uL30 family. In terms of assembly, part of the 50S ribosomal subunit.

In Marinobacter nauticus (strain ATCC 700491 / DSM 11845 / VT8) (Marinobacter aquaeolei), this protein is Large ribosomal subunit protein uL30.